Here is a 376-residue protein sequence, read N- to C-terminus: MASLSETLRSHWPIALFGVILFVAGGTELYWNEGRAVHNMMALDEAHADIYSVRFTEEEQEVGLEGRIVHLSGPILVGEPLTEPDYNIQLLAVKLRRRVQMYQWVEEAVEHNYGDSVGTTHSDSRTYYYTREWRDKIVDSRNFYNRHGHTNPSHFPIESHVQVADAVFIGRYELGAEVKEKFNNYQELTSDIRPEDSGVKLHLGIYYHTNDVFNPEVGDLRLLFSFAGMEGEVFSVVGKLSGNKLVPYITSRGVPVLLVYPGGLSVQEVFRLEARAQVLHTWWWRFVGWLLIFFGVTCNTKILRLLFVRVPLLVALAPDPQFPVTGNLLIAFSLALTIAAVAWILHRPVIGACLLLAGASPYVWFTRNLVDYHRLD.

Over 1-10 the chain is Cytoplasmic; the sequence is MASLSETLRS. Residues 11–31 form a helical membrane-spanning segment; it reads HWPIALFGVILFVAGGTELYW. Topologically, residues 32–277 are lumenal; sequence NEGRAVHNMM…EVFRLEARAQ (246 aa). The helical transmembrane segment at 278-298 threads the bilayer; sequence VLHTWWWRFVGWLLIFFGVTC. Residues 299 to 323 lie on the Cytoplasmic side of the membrane; sequence NTKILRLLFVRVPLLVALAPDPQFP. The next 2 helical transmembrane spans lie at 324 to 344 and 345 to 365; these read VTGNLLIAFSLALTIAAVAWI and LHRPVIGACLLLAGASPYVWF. The Cytoplasmic segment spans residues 366–376; it reads TRNLVDYHRLD.

Belongs to the TMEM43 family.

The protein localises to the endoplasmic reticulum membrane. It localises to the nucleus envelope. Involved in lipid metabolism and utilization. The polypeptide is Transmembrane protein 43 homolog (Drosophila melanogaster (Fruit fly)).